The primary structure comprises 357 residues: G-protein coupled receptor 183 (357 aa).

The Extracellular portion of the chain corresponds to 1 to 32 (MANNFTTPLAASHGNNCDLYAHHSTARILMPL). An N-linked (GlcNAc...) asparagine glycan is attached at asparagine 4. A helical transmembrane segment spans residues 33–53 (HYSLVFIIGLVGNLLALVVIV). Residues 54–68 (QNRKKINSTTLYSMN) are Cytoplasmic-facing. Residues 69-89 (LVISDILFTTALPTRIVYYAL) traverse the membrane as a helical segment. Residue arginine 83 participates in 7alpha,25-dihydroxycholesterol binding. The Extracellular portion of the chain corresponds to 90 to 101 (GFDWRIGDALCR). Cysteine 100 and cysteine 177 are oxidised to a cystine. A helical transmembrane segment spans residues 102-122 (ITALLFYINTYAGVNFMTCLS). 7alpha,25-dihydroxycholesterol is bound by residues tyrosine 108 and tyrosine 112. The interaction with G proteins stretch occupies residues 122-130 (SIDRFFAVV). Residues 123–143 (IDRFFAVVHPLRYNKIKRIEY) are Cytoplasmic-facing. A helical membrane pass occupies residues 144-164 (AKGICVFVWILVFAQTLPLLL). The Extracellular portion of the chain corresponds to 165–190 (KPMSKQEADKTTCMEYPNFEGTASLP). Residues 191–211 (WILLGACLLGYVLPLAIILLC) form a helical membrane-spanning segment. Over 212 to 240 (YSQICCKLFRTAKQNPLTEKSGVNKKALN) the chain is Cytoplasmic. A helical membrane pass occupies residues 241–261 (TIILIIGVFVLCFTPYHVAIM). Tyrosine 256 is a binding site for 7alpha,25-dihydroxycholesterol. Residues 262–287 (QHMVKTLYAPGALGCGVRHSFQISLH) lie on the Extracellular side of the membrane. The helical transmembrane segment at 288-308 (FTVCLMNFNCCMDPFIYFFAC) threads the bilayer. Over 309-357 (KGYKRKVMKMLKRQVSVSISSAVRSAPEENSREMTESQMMIHSKASNGR) the chain is Cytoplasmic. Serine 324 and serine 345 each carry phosphoserine. The tract at residues 336–357 (EENSREMTESQMMIHSKASNGR) is disordered. Polar residues predominate over residues 344–357 (ESQMMIHSKASNGR).

Belongs to the G-protein coupled receptor 1 family. Homodimer and heterodimer. Heterodimerizes with CXCR5; leading to modulate the interaction between of CXCL13 and CXCR5.

The protein localises to the cell membrane. In terms of biological role, G-protein coupled receptor expressed in lymphocytes that acts as a chemotactic receptor for B-cells, T-cells, splenic dendritic cells, monocytes/macrophages and astrocytes. Receptor for oxysterol 7-alpha,25-dihydroxycholesterol (7-alpha,25-OHC) and other related oxysterols. Mediates cell positioning and movement of a number of cells by binding the 7-alpha,25-OHC ligand that forms a chemotactic gradient. Binding of 7-alpha,25-OHC mediates the correct localization of B-cells during humoral immune responses. Guides B-cell movement along the B-cell zone-T-cell zone boundary and later to interfollicular and outer follicular regions. Its specific expression during B-cell maturation helps position B-cells appropriately for mounting T-dependent antibody responses. Collaborates with CXCR5 to mediate B-cell migration; probably by forming a heterodimer with CXCR5 that affects the interaction between of CXCL13 and CXCR5. Also acts as a chemotactic receptor for some T-cells upon binding to 7-alpha,25-OHC ligand. Promotes follicular helper T (Tfh) cells differentiation by positioning activated T-cells at the follicle-T-zone interface, promoting contact of newly activated CD4 T-cells with activated dendritic cells and exposing them to Tfh-cell-promoting inducible costimulator (ICOS) ligand. Expression in splenic dendritic cells is required for their homeostasis, localization and ability to induce B- and T-cell responses: GPR183 acts as a chemotactic receptor in dendritic cells that mediates the accumulation of CD4(+) dendritic cells in bridging channels. Regulates migration of astrocytes and is involved in communication between astrocytes and macrophages. Promotes osteoclast precursor migration to bone surfaces. Signals constitutively through G(i)-alpha, but not G(s)-alpha or G(q)-alpha. Signals constitutively also via MAPK1/3 (ERK1/2). This is G-protein coupled receptor 183 (Gpr183) from Rattus norvegicus (Rat).